Here is a 271-residue protein sequence, read N- to C-terminus: Phosphoribosylformylglycinamidine synthase subunit PurQ (271 aa).

The 247-residue stretch at 7–253 folds into the Glutamine amidotransferase type-1 domain; the sequence is KVAVLRMEGT…FGYQVGRREG (247 aa). The Nucleophile role is filled by cysteine 104. Catalysis depends on residues histidine 238 and glutamate 240.

As to quaternary structure, part of the FGAM synthase complex composed of 1 PurL, 1 PurQ and 2 PurS subunits.

It localises to the cytoplasm. The catalysed reaction is N(2)-formyl-N(1)-(5-phospho-beta-D-ribosyl)glycinamide + L-glutamine + ATP + H2O = 2-formamido-N(1)-(5-O-phospho-beta-D-ribosyl)acetamidine + L-glutamate + ADP + phosphate + H(+). It catalyses the reaction L-glutamine + H2O = L-glutamate + NH4(+). The protein operates within purine metabolism; IMP biosynthesis via de novo pathway; 5-amino-1-(5-phospho-D-ribosyl)imidazole from N(2)-formyl-N(1)-(5-phospho-D-ribosyl)glycinamide: step 1/2. In terms of biological role, part of the phosphoribosylformylglycinamidine synthase complex involved in the purines biosynthetic pathway. Catalyzes the ATP-dependent conversion of formylglycinamide ribonucleotide (FGAR) and glutamine to yield formylglycinamidine ribonucleotide (FGAM) and glutamate. The FGAM synthase complex is composed of three subunits. PurQ produces an ammonia molecule by converting glutamine to glutamate. PurL transfers the ammonia molecule to FGAR to form FGAM in an ATP-dependent manner. PurS interacts with PurQ and PurL and is thought to assist in the transfer of the ammonia molecule from PurQ to PurL. The protein is Phosphoribosylformylglycinamidine synthase subunit PurQ of Archaeoglobus fulgidus (strain ATCC 49558 / DSM 4304 / JCM 9628 / NBRC 100126 / VC-16).